Reading from the N-terminus, the 406-residue chain is Bifunctional enzyme IspD/IspF (406 aa).

The tract at residues 1-247 is 2-C-methyl-D-erythritol 4-phosphate cytidylyltransferase; it reads MSLIRVNGEA…ALFFNPAKDT (247 aa). A 2-C-methyl-D-erythritol 2,4-cyclodiphosphate synthase region spans residues 248–406; sequence FIGMGFDTHA…HVSMRYKQKL (159 aa). The a divalent metal cation site is built by aspartate 254 and histidine 256. Residues 254 to 256 and 280 to 281 each bind 4-CDP-2-C-methyl-D-erythritol 2-phosphate; these read DTH and HS. Histidine 288 lines the a divalent metal cation pocket. 4-CDP-2-C-methyl-D-erythritol 2-phosphate-binding positions include 302-304, 307-311, 378-381, phenylalanine 385, and lysine 388; these read DIG, FPDND, and TTME.

This sequence in the N-terminal section; belongs to the IspD/TarI cytidylyltransferase family. IspD subfamily. The protein in the C-terminal section; belongs to the IspF family. A divalent metal cation is required as a cofactor.

It carries out the reaction 2-C-methyl-D-erythritol 4-phosphate + CTP + H(+) = 4-CDP-2-C-methyl-D-erythritol + diphosphate. It catalyses the reaction 4-CDP-2-C-methyl-D-erythritol 2-phosphate = 2-C-methyl-D-erythritol 2,4-cyclic diphosphate + CMP. It functions in the pathway isoprenoid biosynthesis; isopentenyl diphosphate biosynthesis via DXP pathway; isopentenyl diphosphate from 1-deoxy-D-xylulose 5-phosphate: step 2/6. The protein operates within isoprenoid biosynthesis; isopentenyl diphosphate biosynthesis via DXP pathway; isopentenyl diphosphate from 1-deoxy-D-xylulose 5-phosphate: step 4/6. Bifunctional enzyme that catalyzes the formation of 4-diphosphocytidyl-2-C-methyl-D-erythritol from CTP and 2-C-methyl-D-erythritol 4-phosphate (MEP) (IspD), and catalyzes the conversion of 4-diphosphocytidyl-2-C-methyl-D-erythritol 2-phosphate (CDP-ME2P) to 2-C-methyl-D-erythritol 2,4-cyclodiphosphate (ME-CPP) with a corresponding release of cytidine 5-monophosphate (CMP) (IspF). The sequence is that of Bifunctional enzyme IspD/IspF from Helicobacter pylori (strain P12).